Reading from the N-terminus, the 681-residue chain is Minichromosome maintenance domain-containing protein 2 (681 aa).

Serine 292 bears the Phosphoserine mark. The 89-residue stretch at 533 to 621 (KQFTTEDFEK…LIAALLLEIS (89 aa)) folds into the MCM domain.

As to expression, predominantly expressed in the gonads and the brain. Not detected in the heart, lung, nor embryonic fibroblasts.

Plays an important role in meiotic recombination and associated DNA double-strand break repair. The polypeptide is Minichromosome maintenance domain-containing protein 2 (Mcmdc2) (Mus musculus (Mouse)).